The primary structure comprises 609 residues: Zinc metalloproteinase-disintegrin-like (609 aa).

The N-terminal stretch at 1 to 20 is a signal peptide; that stretch reads MIQVLLVTICLAALPYQGSS. A propeptide spanning residues 21-189 is cleaved from the precursor; it reads IILESGNVND…KKASQLVVTA (169 aa). Positions 198-393 constitute a Peptidase M12B domain; it reads RFVELVLVVD…QNPECIVNEP (196 aa). Residues E201 and D285 each contribute to the Ca(2+) site. Intrachain disulfides connect C308–C388, C348–C372, and C350–C355. A Zn(2+)-binding site is contributed by H333. E334 is an active-site residue. Residues H337 and H343 each contribute to the Zn(2+) site. N-linked (GlcNAc...) asparagine glycosylation occurs at N371. Residues C388, N391, V403, N406, L408, E410, E413, and D416 each coordinate Ca(2+). Residues 401–487 enclose the Disintegrin domain; that stretch reads PPVCGNELLE…ECPADVFHKN (87 aa). Intrachain disulfides connect C404/C433, C415/C428, C417/C423, C427/C450, C441/C447, C446/C472, C459/C479, C466/C498, C491/C503, C510/C560, C525/C571, C538/C548, C555/C597, and C591/C602. The short motif at 465–467 is the D/ECD-tripeptide element; the sequence is ECD. Residues D467, P468, E470, D482, and V483 each coordinate Ca(2+).

The protein belongs to the venom metalloproteinase (M12B) family. P-III subfamily. P-IIIa sub-subfamily. In terms of assembly, monomer. The cofactor is Zn(2+). As to expression, expressed by the venom gland.

The protein resides in the secreted. This protein is a zinc metalloprotease from snake venom that possesses hemorrhagic activity. This Crotalus durissus durissus (Central American rattlesnake) protein is Zinc metalloproteinase-disintegrin-like.